We begin with the raw amino-acid sequence, 874 residues long: Alanine--tRNA ligase (874 aa).

Zn(2+) is bound by residues His562, His566, Cys663, and His667.

Belongs to the class-II aminoacyl-tRNA synthetase family. Requires Zn(2+) as cofactor.

Its subcellular location is the cytoplasm. The catalysed reaction is tRNA(Ala) + L-alanine + ATP = L-alanyl-tRNA(Ala) + AMP + diphosphate. Functionally, catalyzes the attachment of alanine to tRNA(Ala) in a two-step reaction: alanine is first activated by ATP to form Ala-AMP and then transferred to the acceptor end of tRNA(Ala). Also edits incorrectly charged Ser-tRNA(Ala) and Gly-tRNA(Ala) via its editing domain. The sequence is that of Alanine--tRNA ligase from Bordetella parapertussis (strain 12822 / ATCC BAA-587 / NCTC 13253).